Here is a 292-residue protein sequence, read N- to C-terminus: Geranyl diphosphate 2-C-methyltransferase (292 aa).

This sequence belongs to the geranyl diphosphate 2-C-methyltransferase family. Mg(2+) serves as cofactor.

It catalyses the reaction (2E)-geranyl diphosphate + S-adenosyl-L-methionine = (E)-2-methylgeranyl diphosphate + S-adenosyl-L-homocysteine + H(+). Catalyzes the SAM-dependent methylation of geranyl diphosphate (GPP) to yield (E)-2-methylgeranyl diphosphate (2-MeGPP). The protein is Geranyl diphosphate 2-C-methyltransferase of Streptomyces coelicolor (strain ATCC BAA-471 / A3(2) / M145).